The chain runs to 175 residues: NADH-quinone oxidoreductase subunit I (175 aa).

4Fe-4S ferredoxin-type domains follow at residues 64 to 93 and 110 to 139; these read KRDE…IIAD and SLYE…LTEE. Residues C73, C76, C79, C83, C119, C122, C125, and C129 each contribute to the [4Fe-4S] cluster site.

The protein belongs to the complex I 23 kDa subunit family. NDH-1 is composed of 14 different subunits. Subunits NuoA, H, J, K, L, M, N constitute the membrane sector of the complex. It depends on [4Fe-4S] cluster as a cofactor.

The protein localises to the cell inner membrane. The enzyme catalyses a quinone + NADH + 5 H(+)(in) = a quinol + NAD(+) + 4 H(+)(out). Its function is as follows. NDH-1 shuttles electrons from NADH, via FMN and iron-sulfur (Fe-S) centers, to quinones in the respiratory chain. The immediate electron acceptor for the enzyme in this species is believed to be ubiquinone. Couples the redox reaction to proton translocation (for every two electrons transferred, four hydrogen ions are translocated across the cytoplasmic membrane), and thus conserves the redox energy in a proton gradient. In Cytophaga hutchinsonii (strain ATCC 33406 / DSM 1761 / CIP 103989 / NBRC 15051 / NCIMB 9469 / D465), this protein is NADH-quinone oxidoreductase subunit I.